We begin with the raw amino-acid sequence, 367 residues long: Riboflavin biosynthesis protein VVA0006 (367 aa).

215–219 (RLHSE) provides a ligand contact to GTP. 3 residues coordinate Zn(2+): C220, C231, and C233. Residues Q236, 258-260 (EGR), and T280 each bind GTP. The active-site Proton acceptor is the D292. R294 acts as the Nucleophile in catalysis. The GTP site is built by T315 and K320.

This sequence in the N-terminal section; belongs to the YbiA family. The protein in the C-terminal section; belongs to the GTP cyclohydrolase II family. The cofactor is Zn(2+).

It carries out the reaction 2,5-diamino-6-hydroxy-4-(5-phosphoribosylamino)-pyrimidine + H2O = 2,5,6-triamino-4-hydroxypyrimidine + D-ribose 5-phosphate. The enzyme catalyses 5-amino-6-(5-phospho-D-ribosylamino)uracil + H2O = 5,6-diaminouracil + D-ribose 5-phosphate. The catalysed reaction is GTP + 4 H2O = 2,5-diamino-6-hydroxy-4-(5-phosphoribosylamino)-pyrimidine + formate + 2 phosphate + 3 H(+). It participates in cofactor biosynthesis; riboflavin biosynthesis; 5-amino-6-(D-ribitylamino)uracil from GTP: step 1/4. In terms of biological role, catalyzes the hydrolysis of the N-glycosidic bond in the first two intermediates of riboflavin biosynthesis, which are highly reactive metabolites, yielding relatively innocuous products. Thus, can divert a surplus of harmful intermediates into relatively harmless products and pre-empt the damage these intermediates would otherwise do. Has no activity against GTP, nucleoside monophosphates or ADP-ribose. Catalyzes the conversion of GTP to 2,5-diamino-6-ribosylamino-4(3H)-pyrimidinone 5'-phosphate (DARP), formate and pyrophosphate. The polypeptide is Riboflavin biosynthesis protein VVA0006 (Vibrio vulnificus (strain YJ016)).